Here is a 256-residue protein sequence, read N- to C-terminus: MTDASADALTSPSNSGASQDTSQQNAVVLLSGGLDSVTCLYWAKARYAKVTAVSFNYGQRHNSELVAAKSIAGQAGVNHKIIDIDIAQLGGSSLTDHDMTVPDGDADKFPTHTDDIDNQAIPNTYVPARNTIFLSYALAVAEVTDANHIVIGVSSVDYSGYPDCRPEYIEAFEVMANLATKAGVTGHKLHIQTPLQKLSKAQTIQLGNSLGVDYSQTISCYKADSEGRACGICDSCTLRKRGFSDAGLADPTRYAG.

The interval 1–22 (MTDASADALTSPSNSGASQDTS) is disordered. Over residues 8–22 (ALTSPSNSGASQDTS) the composition is skewed to polar residues. ATP is bound at residue 30–40 (LSGGLDSVTCL). Zn(2+) is bound by residues C220, C230, C233, and C236.

It belongs to the QueC family. The cofactor is Zn(2+).

The enzyme catalyses 7-carboxy-7-deazaguanine + NH4(+) + ATP = 7-cyano-7-deazaguanine + ADP + phosphate + H2O + H(+). The protein operates within purine metabolism; 7-cyano-7-deazaguanine biosynthesis. In terms of biological role, catalyzes the ATP-dependent conversion of 7-carboxy-7-deazaguanine (CDG) to 7-cyano-7-deazaguanine (preQ(0)). The polypeptide is 7-cyano-7-deazaguanine synthase (Psychrobacter sp. (strain PRwf-1)).